The chain runs to 138 residues: Growth factor (138 aa).

A signal peptide spans 1–19 (MSMKYLMLLFAAMIIRSFA). N-linked (GlcNAc...) asparagine; by host glycosylation is present at Asn34. Residues 41–81 (AIRLCGPEGDGYCLHGDCIHARDIDGMYCRCSHGYTGIRCQ) form the EGF-like domain. Disulfide bonds link Cys45/Cys58, Cys53/Cys69, and Cys71/Cys80. Residue Asn95 is glycosylated (N-linked (GlcNAc...) asparagine; by host).

It belongs to the orthopoxvirus OPG019 family.

It localises to the secreted. Stimulates cellular proliferation (hyperplasia)and mobility around infected cells to promote rapid and efficient spread of infection. This is Growth factor (OPG019) from Rabbitpox virus (strain Utrecht) (RPV).